The chain runs to 228 residues: HTH-type transcriptional regulator TfdT (228 aa).

An HTH lysR-type domain is found at 1 to 58 (MEIRQLKYFVAVAEAGGFGTAAQRMHISQPPLTRQIQALERDIGAKLFERTARGVELT). Residues 18–37 (FGTAAQRMHISQPPLTRQIQ) constitute a DNA-binding region (H-T-H motif).

This sequence belongs to the LysR transcriptional regulatory family.

The protein resides in the cytoplasm. Its function is as follows. Does not seem to be involved in the regulation of 3-chlorocatechol degradation. Does not activate the expression of its presumed target operon, tfdCDEF. The sequence is that of HTH-type transcriptional regulator TfdT (tfdT) from Cupriavidus pinatubonensis (strain JMP 134 / LMG 1197) (Cupriavidus necator (strain JMP 134)).